Reading from the N-terminus, the 98-residue chain is Small ribosomal subunit protein bS20 (98 aa).

A compositionally biased stretch (basic residues) spans 1 to 12 (MAPRKPSKKVGP). The segment at 1-34 (MAPRKPSKKVGPQKRPSAEKRVITSKKKQLRNQS) is disordered.

This sequence belongs to the bacterial ribosomal protein bS20 family.

Binds directly to 16S ribosomal RNA. The chain is Small ribosomal subunit protein bS20 from Chlamydia muridarum (strain MoPn / Nigg).